The following is a 560-amino-acid chain: DNA ligase B (560 aa).

Residue K124 is the N6-AMP-lysine intermediate of the active site.

The protein belongs to the NAD-dependent DNA ligase family. LigB subfamily.

It catalyses the reaction NAD(+) + (deoxyribonucleotide)n-3'-hydroxyl + 5'-phospho-(deoxyribonucleotide)m = (deoxyribonucleotide)n+m + AMP + beta-nicotinamide D-nucleotide.. Catalyzes the formation of phosphodiester linkages between 5'-phosphoryl and 3'-hydroxyl groups in double-stranded DNA using NAD as a coenzyme and as the energy source for the reaction. The chain is DNA ligase B from Escherichia coli O6:K15:H31 (strain 536 / UPEC).